The chain runs to 209 residues: Octanoyltransferase (209 aa).

The BPL/LPL catalytic domain occupies 30-209 (DHEPEIIYLV…IQTEFNKIFK (180 aa)). Substrate is bound by residues 69 to 76 (RGGKFTFH), 143 to 145 (AIG), and 156 to 158 (GVA). Cys174 acts as the Acyl-thioester intermediate in catalysis.

It belongs to the LipB family.

The protein resides in the cytoplasm. It carries out the reaction octanoyl-[ACP] + L-lysyl-[protein] = N(6)-octanoyl-L-lysyl-[protein] + holo-[ACP] + H(+). It participates in protein modification; protein lipoylation via endogenous pathway; protein N(6)-(lipoyl)lysine from octanoyl-[acyl-carrier-protein]: step 1/2. Functionally, catalyzes the transfer of endogenously produced octanoic acid from octanoyl-acyl-carrier-protein onto the lipoyl domains of lipoate-dependent enzymes. Lipoyl-ACP can also act as a substrate although octanoyl-ACP is likely to be the physiological substrate. This Rickettsia rickettsii (strain Iowa) protein is Octanoyltransferase.